The chain runs to 162 residues: UPF0114 protein Psyr_4257 (162 aa).

The next 4 helical transmembrane spans lie at 15 to 35 (LLAPIYFGLSLGLLALCLKFF), 53 to 73 (LILVLLSLIDMALVGGLLVMV), 109 to 129 (VAASIVAISSIHLLRVFMDAT), and 136 to 156 (LMWYVIIHMTFVISAFAMGYL).

The protein belongs to the UPF0114 family.

It is found in the cell membrane. This is UPF0114 protein Psyr_4257 from Pseudomonas syringae pv. syringae (strain B728a).